The chain runs to 346 residues: Membrane progestin receptor alpha (346 aa).

Topologically, residues 1-72 are cytoplasmic; it reads MAMAQKLSHL…RTLFQQHNEA (72 aa). The chain crosses the membrane as a helical span at residues 73–93; the sequence is VNVWTHLLAALVLLLRLALFV. Residues 94–103 are Extracellular-facing; it reads ETVDFWGDPH. Residues 104-124 form a helical membrane-spanning segment; the sequence is ALPLFIIVLASFTYLSFSALA. Topologically, residues 125–137 are cytoplasmic; the sequence is HLLQAKSEFWHYS. The chain crosses the membrane as a helical span at residues 138 to 158; that stretch reads FFFLDYVGVAVYQFGSALAHF. Topologically, residues 159–169 are extracellular; sequence YYAIEPAWHAQ. The helical transmembrane segment at 170–190 threads the bilayer; sequence VQAVFLPMAAFLAWLSCIGSC. Residues 191 to 237 lie on the Cytoplasmic side of the membrane; that stretch reads YNKYIQKPGLLGRTCQEVPSVLAYALDISPVVHRIFVSSDPTTDDPA. Residues 238 to 258 form a helical membrane-spanning segment; it reads LLYHKCQVVFFLLAAAFFSTF. Residues 259 to 276 lie on the Extracellular side of the membrane; the sequence is MPERWFPGSCHVFGQGHQ. A helical transmembrane segment spans residues 277-297; that stretch reads LFHIFLVLCTLAQLEAVALDY. At 298–316 the chain is on the cytoplasmic side; the sequence is EARRPIYEPLHTHWPHNFS. Residues 317–337 form a helical membrane-spanning segment; it reads GLFLLTVGSSILTAFLLSQLV. Over 338 to 346 the chain is Extracellular; that stretch reads QRKLDQKTK.

It belongs to the ADIPOR family. In terms of tissue distribution, expressed in a wide range of tissues including ovary, testis, placenta, uterus and bladder.

The protein localises to the cell membrane. Functionally, plasma membrane progesterone (P4) receptor coupled to G proteins. Seems to act through a G(i) mediated pathway. May be involved in oocyte maturation. Involved in neurosteroid inhibition of apoptosis. Also binds dehydroepiandrosterone (DHEA), pregnanolone, pregnenolone and allopregnanolone. The sequence is that of Membrane progestin receptor alpha from Homo sapiens (Human).